Here is a 528-residue protein sequence, read N- to C-terminus: Bifunctional pantoate ligase/cytidylate kinase (528 aa).

The tract at residues 1–293 (MRLFTTIAGL…IGSCRLIDNI (293 aa)) is pantoate--beta-alanine ligase. 34 to 41 (MGALHKGH) lines the ATP pocket. Histidine 41 serves as the catalytic Proton donor. Position 65 (glutamine 65) interacts with (R)-pantoate. Glutamine 65 provides a ligand contact to beta-alanine. 160-163 (GQKD) provides a ligand contact to ATP. Residue glutamine 166 coordinates (R)-pantoate. Residues isoleucine 189 and 197–200 (ISSR) contribute to the ATP site. The tract at residues 294-528 (LLRNRKPIIA…YGKSSVNNII (235 aa)) is cytidylate kinase.

It in the N-terminal section; belongs to the pantothenate synthetase family. The protein in the C-terminal section; belongs to the cytidylate kinase family. Type 1 subfamily.

It localises to the cytoplasm. It catalyses the reaction (R)-pantoate + beta-alanine + ATP = (R)-pantothenate + AMP + diphosphate + H(+). It carries out the reaction CMP + ATP = CDP + ADP. The catalysed reaction is dCMP + ATP = dCDP + ADP. It participates in cofactor biosynthesis; (R)-pantothenate biosynthesis; (R)-pantothenate from (R)-pantoate and beta-alanine: step 1/1. Its function is as follows. Catalyzes the condensation of pantoate with beta-alanine in an ATP-dependent reaction via a pantoyl-adenylate intermediate. Catalyzes the transfer of a phosphate group from ATP to either CMP or dCMP to form CDP or dCDP and ADP, respectively. The chain is Bifunctional pantoate ligase/cytidylate kinase from Trichodesmium erythraeum (strain IMS101).